We begin with the raw amino-acid sequence, 513 residues long: ATP synthase subunit alpha (513 aa).

169–176 (GDRQIGKT) is an ATP binding site.

The protein belongs to the ATPase alpha/beta chains family. F-type ATPases have 2 components, CF(1) - the catalytic core - and CF(0) - the membrane proton channel. CF(1) has five subunits: alpha(3), beta(3), gamma(1), delta(1), epsilon(1). CF(0) has three main subunits: a(1), b(2) and c(9-12). The alpha and beta chains form an alternating ring which encloses part of the gamma chain. CF(1) is attached to CF(0) by a central stalk formed by the gamma and epsilon chains, while a peripheral stalk is formed by the delta and b chains.

The protein resides in the cell inner membrane. The catalysed reaction is ATP + H2O + 4 H(+)(in) = ADP + phosphate + 5 H(+)(out). In terms of biological role, produces ATP from ADP in the presence of a proton gradient across the membrane. The alpha chain is a regulatory subunit. The chain is ATP synthase subunit alpha from Shewanella woodyi (strain ATCC 51908 / MS32).